A 220-amino-acid chain; its full sequence is Orotate phosphoribosyltransferase (220 aa).

K26 contacts 5-phospho-alpha-D-ribose 1-diphosphate. 34 to 35 (FF) contacts orotate. Residues 72–73 (YK), R101, K102, K105, H107, and 126–134 (DDVITAGTS) contribute to the 5-phospho-alpha-D-ribose 1-diphosphate site. Orotate is bound by residues T130 and R158.

It belongs to the purine/pyrimidine phosphoribosyltransferase family. PyrE subfamily. In terms of assembly, homodimer. Mg(2+) is required as a cofactor.

The enzyme catalyses orotidine 5'-phosphate + diphosphate = orotate + 5-phospho-alpha-D-ribose 1-diphosphate. It functions in the pathway pyrimidine metabolism; UMP biosynthesis via de novo pathway; UMP from orotate: step 1/2. Functionally, catalyzes the transfer of a ribosyl phosphate group from 5-phosphoribose 1-diphosphate to orotate, leading to the formation of orotidine monophosphate (OMP). In Bordetella avium (strain 197N), this protein is Orotate phosphoribosyltransferase.